We begin with the raw amino-acid sequence, 153 residues long: MVALKGIPKVLSPELLFALARMGHGDEIVLADANFPTSSICQCGPVEIRADGLDIPQLLEAVLRLLPLDTYVESPAAVMDLVPSDKEKGLQTPIWKRYESLLLEADCKKTLMKLERFEFYERAKKAFAVVATGEMALYGNIILKKGTLDLGPS.

H24 (proton donor) is an active-site residue. Residue D32 participates in substrate binding. D69 is a catalytic residue. The substrate site is built by M79, Y120, Y138, and N140. Residue Y120 is part of the active site.

The protein belongs to the RbsD / FucU family. Mainly homodimer, but also exists as homotetramer, homooctamer, and homodecamer. The homodimeric form seems catalytically inactive. In terms of tissue distribution, widely expressed in various tissues and cell lines, including kidney, liver, and pancreas, marginally in muscle and testis.

The catalysed reaction is alpha-L-fucose = beta-L-fucose. It functions in the pathway carbohydrate metabolism; L-fucose metabolism. In terms of biological role, involved in the interconversion between alpha- and beta-L-fucoses. L-Fucose (6-deoxy-L-galactose) exists as alpha-L-fucose (29.5%) and beta-L-fucose (70.5%), the beta-form is metabolized through the salvage pathway. GDP-L-fucose formed either by the de novo or salvage pathways is transported into the endoplasmic reticulum, where it serves as a substrate for N- and O-glycosylations by fucosyltransferases. Fucosylated structures expressed on cell surfaces or secreted in biological fluids are believed to play a critical role in cell-cell adhesion and recognition processes. This chain is Fucose mutarotase (Fuom), found in Mus musculus (Mouse).